The primary structure comprises 189 residues: Peptidyl-tRNA hydrolase (189 aa).

Position 16 (Tyr16) interacts with tRNA. His21 serves as the catalytic Proton acceptor. TRNA contacts are provided by Phe67, Asn69, and Asn115.

The protein belongs to the PTH family. Monomer.

Its subcellular location is the cytoplasm. The enzyme catalyses an N-acyl-L-alpha-aminoacyl-tRNA + H2O = an N-acyl-L-amino acid + a tRNA + H(+). Its function is as follows. Hydrolyzes ribosome-free peptidyl-tRNAs (with 1 or more amino acids incorporated), which drop off the ribosome during protein synthesis, or as a result of ribosome stalling. Functionally, catalyzes the release of premature peptidyl moieties from peptidyl-tRNA molecules trapped in stalled 50S ribosomal subunits, and thus maintains levels of free tRNAs and 50S ribosomes. This is Peptidyl-tRNA hydrolase from Legionella pneumophila (strain Corby).